The chain runs to 203 residues: Phospho-2-dehydro-3-deoxyheptonate aldolase (203 aa).

Residues 1-10 are compositionally biased toward basic and acidic residues; it reads MIDRLVRDSR. The tract at residues 1–28 is disordered; sequence MIDRLVRDSRGPVTERNPPHMSLSAGPA.

This sequence belongs to the class-I DAHP synthase family.

The enzyme catalyses D-erythrose 4-phosphate + phosphoenolpyruvate + H2O = 7-phospho-2-dehydro-3-deoxy-D-arabino-heptonate + phosphate. It functions in the pathway metabolic intermediate biosynthesis; chorismate biosynthesis; chorismate from D-erythrose 4-phosphate and phosphoenolpyruvate: step 1/7. Its function is as follows. Stereospecific condensation of phosphoenolpyruvate (PEP) and D-erythrose-4-phosphate (E4P) giving rise to 3-deoxy-D-arabino-heptulosonate-7-phosphate (DAHP). The protein is Phospho-2-dehydro-3-deoxyheptonate aldolase (aroA) of Amycolatopsis methanolica.